The primary structure comprises 468 residues: UDP-N-acetylmuramate--L-alanine ligase (468 aa).

114–120 (GTHGKTT) is an ATP binding site.

Belongs to the MurCDEF family.

It localises to the cytoplasm. It catalyses the reaction UDP-N-acetyl-alpha-D-muramate + L-alanine + ATP = UDP-N-acetyl-alpha-D-muramoyl-L-alanine + ADP + phosphate + H(+). It functions in the pathway cell wall biogenesis; peptidoglycan biosynthesis. In terms of biological role, cell wall formation. This chain is UDP-N-acetylmuramate--L-alanine ligase, found in Methylobacterium radiotolerans (strain ATCC 27329 / DSM 1819 / JCM 2831 / NBRC 15690 / NCIMB 10815 / 0-1).